We begin with the raw amino-acid sequence, 37 residues long: Large ribosomal subunit protein bL36c (37 aa).

This sequence belongs to the bacterial ribosomal protein bL36 family.

It is found in the plastid. The protein resides in the chloroplast. This Oenothera argillicola (Appalachian evening primrose) protein is Large ribosomal subunit protein bL36c.